Here is a 442-residue protein sequence, read N- to C-terminus: Thymidine phosphorylase (442 aa).

This sequence belongs to the thymidine/pyrimidine-nucleoside phosphorylase family. In terms of assembly, homodimer.

It catalyses the reaction thymidine + phosphate = 2-deoxy-alpha-D-ribose 1-phosphate + thymine. It functions in the pathway pyrimidine metabolism; dTMP biosynthesis via salvage pathway; dTMP from thymine: step 1/2. Its function is as follows. The enzymes which catalyze the reversible phosphorolysis of pyrimidine nucleosides are involved in the degradation of these compounds and in their utilization as carbon and energy sources, or in the rescue of pyrimidine bases for nucleotide synthesis. This Vibrio vulnificus (strain CMCP6) protein is Thymidine phosphorylase.